A 274-amino-acid chain; its full sequence is Thiamine kinase (274 aa).

It belongs to the thiamine kinase family.

The catalysed reaction is thiamine + ATP = thiamine phosphate + ADP + H(+). Its pathway is cofactor biosynthesis; thiamine diphosphate biosynthesis; thiamine phosphate from thiamine: step 1/1. Its function is as follows. Catalyzes the ATP-dependent phosphorylation of thiamine to thiamine phosphate. Is involved in thiamine salvage. This is Thiamine kinase from Salmonella choleraesuis (strain SC-B67).